The following is a 160-amino-acid chain: 6,7-dimethyl-8-ribityllumazine synthase (160 aa).

Residues Phe-22, 57–59, and 81–83 each bind 5-amino-6-(D-ribitylamino)uracil; these read TYE and TII. Residue 86 to 87 participates in (2S)-2-hydroxy-3-oxobutyl phosphate binding; the sequence is QT. Residue His-89 is the Proton donor of the active site. Residue Leu-114 coordinates 5-amino-6-(D-ribitylamino)uracil. Arg-128 contacts (2S)-2-hydroxy-3-oxobutyl phosphate.

Belongs to the DMRL synthase family. In terms of assembly, forms an icosahedral capsid composed of 60 subunits, arranged as a dodecamer of pentamers.

It carries out the reaction (2S)-2-hydroxy-3-oxobutyl phosphate + 5-amino-6-(D-ribitylamino)uracil = 6,7-dimethyl-8-(1-D-ribityl)lumazine + phosphate + 2 H2O + H(+). The protein operates within cofactor biosynthesis; riboflavin biosynthesis; riboflavin from 2-hydroxy-3-oxobutyl phosphate and 5-amino-6-(D-ribitylamino)uracil: step 1/2. Catalyzes the formation of 6,7-dimethyl-8-ribityllumazine by condensation of 5-amino-6-(D-ribitylamino)uracil with 3,4-dihydroxy-2-butanone 4-phosphate. This is the penultimate step in the biosynthesis of riboflavin. This is 6,7-dimethyl-8-ribityllumazine synthase from Buchnera aphidicola subsp. Acyrthosiphon pisum (strain Tuc7).